A 205-amino-acid chain; its full sequence is Ribonuclease HII (205 aa).

The 191-residue stretch at 15 to 205 (SQVCGIDEAG…SFKLRKLGEK (191 aa)) folds into the RNase H type-2 domain. Positions 21, 22, and 117 each coordinate a divalent metal cation.

The protein belongs to the RNase HII family. Mn(2+) serves as cofactor. Requires Mg(2+) as cofactor.

The protein localises to the cytoplasm. The catalysed reaction is Endonucleolytic cleavage to 5'-phosphomonoester.. Endonuclease that specifically degrades the RNA of RNA-DNA hybrids. This chain is Ribonuclease HII, found in Chlorobaculum tepidum (strain ATCC 49652 / DSM 12025 / NBRC 103806 / TLS) (Chlorobium tepidum).